Reading from the N-terminus, the 125-residue chain is Large ribosomal subunit protein uL22c (125 aa).

It belongs to the universal ribosomal protein uL22 family. In terms of assembly, part of the 50S ribosomal subunit.

The protein localises to the plastid. The protein resides in the chloroplast. In terms of biological role, this protein binds specifically to 23S rRNA. Its function is as follows. The globular domain of the protein is located near the polypeptide exit tunnel on the outside of the subunit, while an extended beta-hairpin is found that lines the wall of the exit tunnel in the center of the 70S ribosome. The protein is Large ribosomal subunit protein uL22c (rpl22) of Nuphar advena (Common spatterdock).